Reading from the N-terminus, the 252-residue chain is tRNA-cytidine(32) 2-sulfurtransferase (252 aa).

The short motif at 37–42 is the PP-loop motif element; the sequence is SGGKDS. [4Fe-4S] cluster contacts are provided by Cys-112, Cys-115, and Cys-202.

This sequence belongs to the TtcA family. As to quaternary structure, homodimer. Requires Mg(2+) as cofactor. The cofactor is [4Fe-4S] cluster.

The protein localises to the cytoplasm. The catalysed reaction is cytidine(32) in tRNA + S-sulfanyl-L-cysteinyl-[cysteine desulfurase] + AH2 + ATP = 2-thiocytidine(32) in tRNA + L-cysteinyl-[cysteine desulfurase] + A + AMP + diphosphate + H(+). It functions in the pathway tRNA modification. Its function is as follows. Catalyzes the ATP-dependent 2-thiolation of cytidine in position 32 of tRNA, to form 2-thiocytidine (s(2)C32). The sulfur atoms are provided by the cysteine/cysteine desulfurase (IscS) system. The protein is tRNA-cytidine(32) 2-sulfurtransferase of Geotalea daltonii (strain DSM 22248 / JCM 15807 / FRC-32) (Geobacter daltonii).